The sequence spans 367 residues: uncharacterized protein (367 aa).

This sequence to M.tuberculosis Rv0502.

This is an uncharacterized protein from Mycobacterium leprae (strain TN).